Consider the following 361-residue polypeptide: Lipoyl synthase 1, chloroplastic (361 aa).

[4Fe-4S] cluster is bound by residues Cys-87, Cys-92, Cys-98, Cys-124, Cys-128, Cys-131, and Ser-339. The Radical SAM core domain maps to 107–328; that stretch reads GEGDGIATAT…KEYGESVGFR (222 aa).

It belongs to the radical SAM superfamily. Lipoyl synthase family. Requires [4Fe-4S] cluster as cofactor.

Its subcellular location is the plastid. It is found in the chloroplast. The catalysed reaction is [[Fe-S] cluster scaffold protein carrying a second [4Fe-4S](2+) cluster] + N(6)-octanoyl-L-lysyl-[protein] + 2 oxidized [2Fe-2S]-[ferredoxin] + 2 S-adenosyl-L-methionine + 4 H(+) = [[Fe-S] cluster scaffold protein] + N(6)-[(R)-dihydrolipoyl]-L-lysyl-[protein] + 4 Fe(3+) + 2 hydrogen sulfide + 2 5'-deoxyadenosine + 2 L-methionine + 2 reduced [2Fe-2S]-[ferredoxin]. Its pathway is protein modification; protein lipoylation via endogenous pathway; protein N(6)-(lipoyl)lysine from octanoyl-[acyl-carrier-protein]: step 2/2. Catalyzes the radical-mediated insertion of two sulfur atoms into the C-6 and C-8 positions of the octanoyl moiety bound to the lipoyl domains of lipoate-dependent enzymes, thereby converting the octanoylated domains into lipoylated derivatives. This chain is Lipoyl synthase 1, chloroplastic, found in Zea mays (Maize).